The following is a 363-amino-acid chain: Phosphoribosylformylglycinamidine cyclo-ligase (363 aa).

Belongs to the AIR synthase family.

Its subcellular location is the cytoplasm. It catalyses the reaction 2-formamido-N(1)-(5-O-phospho-beta-D-ribosyl)acetamidine + ATP = 5-amino-1-(5-phospho-beta-D-ribosyl)imidazole + ADP + phosphate + H(+). The protein operates within purine metabolism; IMP biosynthesis via de novo pathway; 5-amino-1-(5-phospho-D-ribosyl)imidazole from N(2)-formyl-N(1)-(5-phospho-D-ribosyl)glycinamide: step 2/2. The sequence is that of Phosphoribosylformylglycinamidine cyclo-ligase from Parvibaculum lavamentivorans (strain DS-1 / DSM 13023 / NCIMB 13966).